The sequence spans 163 residues: MFKKSYQFFALVLFSIFNVLVTSASAIDLDEATRTVVADSNGNTTVLTPEQVKRGKRLFNNTCGACHVGGVTKTNPNVGLRPEGLSLATPRRDNAAALVDYLKNPTSYDGLESIAEIHPSIKSGDIYPRMRSLTDEDLFSIAGHILLQPKIVTEKWGGGKIYY.

An N-terminal signal peptide occupies residues 1 to 26; sequence MFKKSYQFFALVLFSIFNVLVTSASA. Heme c-binding residues include Cys-63, Cys-66, His-67, and His-118.

It belongs to the cytochrome c family. PsbV subfamily. In terms of assembly, PSII is composed of 1 copy each of membrane proteins PsbA, PsbB, PsbC, PsbD, PsbE, PsbF, PsbH, PsbI, PsbJ, PsbK, PsbL, PsbM, PsbT, PsbY, PsbZ, Psb30/Ycf12, at least 3 peripheral proteins of the oxygen-evolving complex and a large number of cofactors. It forms dimeric complexes. Requires heme c as cofactor.

It is found in the plastid. Its subcellular location is the chloroplast thylakoid membrane. Functionally, one of the extrinsic, lumenal subunits of photosystem II (PSII). PSII is a light-driven water plastoquinone oxidoreductase, using light energy to abstract electrons from H(2)O, generating a proton gradient subsequently used for ATP formation. The extrinsic proteins stabilize the structure of photosystem II oxygen-evolving complex (OEC), the ion environment of oxygen evolution and protect the OEC against heat-induced inactivation. The chain is Photosystem II extrinsic protein V from Trieres chinensis (Marine centric diatom).